The following is a 437-amino-acid chain: Eukaryotic peptide chain release factor subunit 1 (437 aa).

At Ala-2 the chain carries N-acetylalanine. The NIKS motif; plays an important role in translational termination signature appears at 61 to 64; sequence NIKS. A 4-hydroxylysine modification is found at Lys-63. Lys-87 is covalently cross-linked (Glycyl lysine isopeptide (Lys-Gly) (interchain with G-Cter in SUMO2)). Gln-185 is subject to N5-methylglutamine. Thr-347 bears the Phosphothreonine mark. A Glycyl lysine isopeptide (Lys-Gly) (interchain with G-Cter in SUMO2) cross-link involves residue Lys-404.

It belongs to the eukaryotic release factor 1 family. In terms of assembly, component of the eRF1-eRF3-GTP ternary complex, composed of ETF1/ERF1 and eRF3 (GSPT1/ERF3A or GSPT2/ERF3B) and GTP. Component of the transient SURF (SMG1-UPF1-eRF1-eRF3) complex. Interacts with JMJD4. The ETF1-GSPT1 complex interacts with JMJD4. Post-translationally, hydroxylation at Lys-63 by JMJD4 promotes its translational termination efficiency. Methylated at Gln-185 by N6AMT1. In terms of processing, ubiquitinated via 'Lys-6'-linked polyubiquitin chains by RNF14 and RNF25 in response to ribosome collisions (ribosome stalling), leading to its degradation by the proteasome and rescue of stalled ribosomes.

It localises to the cytoplasm. In terms of biological role, component of the eRF1-eRF3-GTP ternary complex, a ternary complex that mediates translation termination in response to the termination codons. The eRF1-eRF3-GTP complex binds to a stop codon in the ribosomal A-site. ETF1/ERF1 is responsible for stop codon recognition and inducing hydrolysis of peptidyl-tRNA. Following GTP hydrolysis, eRF3 (GSPT1/ERF3A or GSPT2/ERF3B) dissociates, permitting ETF1/eRF1 to accommodate fully in the A-site, followed by hydrolysis of peptidyl-tRNA. Component of the transient SURF complex which recruits UPF1 to stalled ribosomes in the context of nonsense-mediated decay (NMD) of mRNAs containing premature stop codons. Required for SHFL-mediated translation termination which inhibits programmed ribosomal frameshifting (-1PRF) of mRNA from viruses and cellular genes. The chain is Eukaryotic peptide chain release factor subunit 1 (ETF1) from Pongo abelii (Sumatran orangutan).